The following is a 429-amino-acid chain: Probable M18 family aminopeptidase 2 (429 aa).

Zn(2+) is bound by residues H82, H156, and H401.

The protein belongs to the peptidase M18 family. It depends on Zn(2+) as a cofactor.

The chain is Probable M18 family aminopeptidase 2 from Pseudomonas putida (strain ATCC 700007 / DSM 6899 / JCM 31910 / BCRC 17059 / LMG 24140 / F1).